A 607-amino-acid polypeptide reads, in one-letter code: MLNERDFDLIFDSYDFKHEGKVHLSNFLPIINDLQLLHPASAPPLLSEFQKQCTLEFVRQNADLSITKDNFRDVYKKLTENEDDSFANQAEKPSMEQQNSKNSIKEDANEHSVNSAHSKSSSNASPESLNPSQMMSKRLSLPPMSQFTDSDFVNILRTPFAQSTPLNRNTSSRNTEMPLVRKDKPDFSNGHHDLIKQITELQDMLDKARDQARKKSRTVDILEGKVNELTHQLNMADSKYNESKVANNSQNNQIKTLKAQNLNIHKNFQKIQSELIQTNSGLYSTKKELSALQVRYATLLRKFTDQTKKIEELSLAASRSSENENTIRRLALENHELKNSNNQLNNHIDDLTREKHLIALSNNPKGDEFLSPSNLDEMVYSKEVGLSFTQPSVCISIPAVGMRESEELRELEFKCKQQKKTIEECKHISQSLQSSLTAESSRNKELVAGFLMLSEEIGIQKWIIQSLSKMSPTLNDFCRRYDSSMPTYEESSHECTVLSSFSDDETGLMATNTTMNNSSKDFMASQDTVNADNPHFLATKGQPLLLLSVMKSNILRLFYVLFLFACFYGLDYILCAELLQAFLRVVFTFCEHIIILLYGRYELVQPS.

The tract at residues 83–135 (DDSFANQAEKPSMEQQNSKNSIKEDANEHSVNSAHSKSSSNASPESLNPSQMM) is disordered. Positions 111–132 (HSVNSAHSKSSSNASPESLNPS) are enriched in low complexity.

Interacts with mcp1 and sad1.

The protein localises to the cytoplasm. It is found in the cytoskeleton. Its subcellular location is the microtubule organizing center. It localises to the spindle pole body. Its function is as follows. Has a role in karyogamy, recombination and segregation during meiosis. Although it has been shown to associate with the spindle pole body it is unlikely to be involved in its formation or maintenance. This chain is Karyogamy meiotic segregation protein 1 (kms1), found in Schizosaccharomyces pombe (strain 972 / ATCC 24843) (Fission yeast).